A 434-amino-acid polypeptide reads, in one-letter code: Adenylosuccinate synthetase (434 aa).

Residues 22-28 (GDEGKGK) and 50-52 (GHT) each bind GTP. Asp-23 acts as the Proton acceptor in catalysis. 2 residues coordinate Mg(2+): Asp-23 and Gly-50. IMP contacts are provided by residues 23–26 (DEGK), 48–51 (NAGH), Thr-139, Arg-153, Gln-234, Thr-249, and Arg-313. His-51 serves as the catalytic Proton donor. Substrate is bound at residue 309 to 315 (ATTGRKR). GTP is bound by residues Arg-315, 341–343 (KLD), and 423–425 (SVG).

Belongs to the adenylosuccinate synthetase family. Homodimer. Mg(2+) serves as cofactor.

The protein localises to the cytoplasm. The enzyme catalyses IMP + L-aspartate + GTP = N(6)-(1,2-dicarboxyethyl)-AMP + GDP + phosphate + 2 H(+). It participates in purine metabolism; AMP biosynthesis via de novo pathway; AMP from IMP: step 1/2. In terms of biological role, plays an important role in the de novo pathway of purine nucleotide biosynthesis. Catalyzes the first committed step in the biosynthesis of AMP from IMP. The chain is Adenylosuccinate synthetase from Chlorobium limicola (strain DSM 245 / NBRC 103803 / 6330).